The primary structure comprises 612 residues: C4-dicarboxylate transport sensor protein DctB (612 aa).

2 helical membrane passes run 23-43 (SLVILALLLAPLLWPLQYFAE) and 292-312 (VLLIGGATLLALLLLLTLLTL). The stretch at 328 to 376 (KRQLEERVLERTRELENANAQLQQEVHEREQAQRELMRAQDEVVQAGKL) forms a coiled coil. The region spanning 385–599 (SISHELNQPL…VVRLHLLPGV (215 aa)) is the Histidine kinase domain. Position 388 is a phosphohistidine; by autocatalysis (H388).

Autophosphorylated.

Its subcellular location is the cell inner membrane. It carries out the reaction ATP + protein L-histidine = ADP + protein N-phospho-L-histidine.. Functionally, member of the two-component regulatory system DctB/DctD, which regulates C4-dicarboxylate transport via regulation of expression of the dctPQM operon and dctA. DctB functions as a membrane-associated protein kinase that phosphorylates DctD in response to environmental signals. The polypeptide is C4-dicarboxylate transport sensor protein DctB (Pseudomonas aeruginosa (strain ATCC 15692 / DSM 22644 / CIP 104116 / JCM 14847 / LMG 12228 / 1C / PRS 101 / PAO1)).